A 211-amino-acid polypeptide reads, in one-letter code: 3-demethoxyubiquinol 3-hydroxylase (211 aa).

The tract at residues 22 to 43 is disordered; the sequence is KHPLNPNRKSPSANTVDGQLSD. Residues 28 to 42 are compositionally biased toward polar residues; it reads NRKSPSANTVDGQLS. Positions 60, 90, 93, 142, 174, and 177 each coordinate Fe cation.

Belongs to the COQ7 family. It depends on Fe cation as a cofactor.

The protein resides in the cell membrane. It carries out the reaction a 5-methoxy-2-methyl-3-(all-trans-polyprenyl)benzene-1,4-diol + AH2 + O2 = a 3-demethylubiquinol + A + H2O. It participates in cofactor biosynthesis; ubiquinone biosynthesis. Catalyzes the hydroxylation of 2-nonaprenyl-3-methyl-6-methoxy-1,4-benzoquinol during ubiquinone biosynthesis. This is 3-demethoxyubiquinol 3-hydroxylase from Francisella philomiragia subsp. philomiragia (strain ATCC 25017 / CCUG 19701 / FSC 153 / O#319-036).